Reading from the N-terminus, the 85-residue chain is Sodium channel neurotoxin MeuNaTxalpha-1 (85 aa).

A signal peptide spans 1-19 (MNSLVMISLALLVMTGVES). The region spanning 21 to 83 (RDGYIADDKN…VPIKVSGKCN (63 aa)) is the LCN-type CS-alpha/beta domain. The interval 27–31 (DDKNC) is specificity module, loop 1. Disulfide bonds link Cys-31–Cys-82, Cys-35–Cys-55, Cys-41–Cys-65, and Cys-45–Cys-67. Specificity module, loop regions lie at residues 58–62 (AGQYG) and 75–83 (PIKVSGKCN). Asn-83 is subject to Asparagine amide.

The protein belongs to the long (4 C-C) scorpion toxin superfamily. Sodium channel inhibitor family. Alpha subfamily. C-terminal amidation does not appear to play an important role in activity, since the non-amidated recombinant toxin and the native toxin (which is amidated) show similar activities on all sodium channels tested. As to expression, expressed by the venom gland.

The protein resides in the secreted. Functionally, alpha toxins bind voltage-independently at site-3 of sodium channels (Nav) and inhibit the inactivation of the activated channels, thereby blocking neuronal transmission. This toxin inhibits inactivation of Nav1.6/SCN8A (EC(50)=3.1 uM) and drosophila DmNav1 (EC(50)=1.17 uM). It also shows a weak inhibition of inactivation on Nav1.2/SCN2A Nav1.3/SCN3A, and Nav1.7/SCN9A. The toxin (1 uM) does not significantly shift the midpoint of activation at the two channels, but induces a significant depolarizing shift in the V(1/2) of inactivation of the channels. The toxin has also been shown to dose-dependently stimulates intracellular signaling in DRG neurons through activation of two kinases (type II protein kinase A (PKA-II) and MAP kinases 1/3 (MAPK1/MAPK3)). Nav1.2/SCN2A is strongly suggested to be the target channel predominantly involved in this activation. In vivo, the toxin induces a dose-dependent thermal hyperalgesia lasting 30-45 minutes. The chain is Sodium channel neurotoxin MeuNaTxalpha-1 from Mesobuthus eupeus (Lesser Asian scorpion).